The chain runs to 141 residues: Large ribosomal subunit protein uL11 (141 aa).

The protein belongs to the universal ribosomal protein uL11 family. As to quaternary structure, part of the ribosomal stalk of the 50S ribosomal subunit. Interacts with L10 and the large rRNA to form the base of the stalk. L10 forms an elongated spine to which L12 dimers bind in a sequential fashion forming a multimeric L10(L12)X complex. One or more lysine residues are methylated.

In terms of biological role, forms part of the ribosomal stalk which helps the ribosome interact with GTP-bound translation factors. This Clostridium tetani (strain Massachusetts / E88) protein is Large ribosomal subunit protein uL11.